A 136-amino-acid polypeptide reads, in one-letter code: Nuclear receptor 2C2-associated protein (136 aa).

The protein belongs to the NR2C2AP family.

Its subcellular location is the nucleus. Its function is as follows. May act as a repressor of nr2c2-mediated transactivation by suppressing the binding between nr2c2 and its response element in target genes. This Xenopus laevis (African clawed frog) protein is Nuclear receptor 2C2-associated protein (nr2c2ap).